An 82-amino-acid chain; its full sequence is MQNDEGKIVDLYIPRKCSATNRLISATDHAAVQINVGHVDPNSGLYTGDYTTFALCGFVRSMGESDAALNRLCVKHGLAKAI.

The protein belongs to the eukaryotic ribosomal protein eS21 family.

The polypeptide is Small ribosomal subunit protein eS21 (RPS21) (Cyanophora paradoxa).